We begin with the raw amino-acid sequence, 233 residues long: Sugar fermentation stimulation protein homolog (233 aa).

The protein belongs to the SfsA family.

The protein is Sugar fermentation stimulation protein homolog of Chelativorans sp. (strain BNC1).